We begin with the raw amino-acid sequence, 391 residues long: Pyruvate dehydrogenase E1 component subunit alpha type II, mitochondrial (391 aa).

A mitochondrion-targeting transit peptide spans 1–17 (SNIFKGPTVGSSVVAMS). Pyruvate-binding residues include H83, Y109, R110, G148, G156, V158, D187, G188, A189, N216, and Y218. Positions 109 and 110 each coordinate thiamine diphosphate. The thiamine diphosphate site is built by G156, V158, D187, G188, A189, and N216. Position 187 (D187) interacts with Mg(2+). N216 and Y218 together coordinate Mg(2+). H283 lines the thiamine diphosphate pocket. Residues S284 and S291 each carry the phosphoserine modification.

Heterotetramer of two PDHA2 and two PDHB subunits. The heterotetramer interacts with DLAT, and is part of the multimeric pyruvate dehydrogenase complex that contains multiple copies of pyruvate dehydrogenase (E1), dihydrolipoamide acetyltransferase (DLAT, E2) and lipoamide dehydrogenase (DLD, E3). Thiamine diphosphate serves as cofactor. Mg(2+) is required as a cofactor.

It localises to the mitochondrion matrix. The enzyme catalyses N(6)-[(R)-lipoyl]-L-lysyl-[protein] + pyruvate + H(+) = N(6)-[(R)-S(8)-acetyldihydrolipoyl]-L-lysyl-[protein] + CO2. With respect to regulation, pyruvate dehydrogenase activity is inhibited by phosphorylation of PDHA2; it is reactivated by dephosphorylation. In terms of biological role, the pyruvate dehydrogenase complex catalyzes the overall conversion of pyruvate to acetyl-CoA and CO(2), and thereby links the glycolytic pathway to the tricarboxylic cycle. The polypeptide is Pyruvate dehydrogenase E1 component subunit alpha type II, mitochondrial (Ascaris suum (Pig roundworm)).